The chain runs to 187 residues: MATPEFDLGDIKRRMQGAVSSLSKDLGSLRTGRATPSLLDPIQVEAYGASMPMAQVATVSVPEPRLLSISVWDRSMVTNVEKAIRESDLGLNPMTEGQTIRLRIPEMNEQRRKEMVKVAHKYTEEARVAVRHVRRDGLDILKKLEKDGAISEDDEKRQAGEVQKATDDAIAEIDGVLASKEKEIMQV.

Belongs to the RRF family.

Its subcellular location is the cytoplasm. In terms of biological role, responsible for the release of ribosomes from messenger RNA at the termination of protein biosynthesis. May increase the efficiency of translation by recycling ribosomes from one round of translation to another. In Methylorubrum populi (strain ATCC BAA-705 / NCIMB 13946 / BJ001) (Methylobacterium populi), this protein is Ribosome-recycling factor.